We begin with the raw amino-acid sequence, 395 residues long: MRSIWNGAISFGLVSIPIKLVNATENHSISFRQIHLADGGRIRYRKVCELDEQEVSGSETGKAYEDADGTMIPITDEDLAQLPLPTAKTIEIVAFVPADRIDPLQMDAAYYLSANGVPAAKPYTLLREALKRSNRVAVAKYALRGRERLGMLRVVGEVIALHGLLWPDEIRPPEDAAPDGDITVRDAELDLADTLMSTLGEVDMDSLHDDYREAVEELAAAKASGESVPPAEPEDTGGEVIDLIAALENSVRAARTSRDDEGAGGDGGDMADVHPIGRGAKASSKTSGQSSGKAARTTKTARRTTHRTPTGKTVTRSGDSTAEKSAPKSSGAKKSTAKKSTAKKTAAQKTTARKTTAKKTTAKGTTGTTAAAKKRTSSGGGTAKKSASSRKRTSA.

The Ku domain occupies 9–181 (ISFGLVSIPI…PPEDAAPDGD (173 aa)). The tract at residues 252-395 (RAARTSRDDE…SASSRKRTSA (144 aa)) is disordered. 2 stretches are compositionally biased toward polar residues: residues 283–292 (SSKTSGQSSG) and 311–320 (GKTVTRSGDS). A compositionally biased stretch (basic residues) spans 351-361 (TARKTTAKKTT). Low complexity predominate over residues 362–371 (AKGTTGTTAA).

Belongs to the prokaryotic Ku family. In terms of assembly, homodimer. Interacts with LigD.

Its function is as follows. With LigD forms a non-homologous end joining (NHEJ) DNA repair enzyme, which repairs dsDNA breaks with reduced fidelity. Binds linear dsDNA with 5'- and 3'- overhangs but not closed circular dsDNA nor ssDNA. Recruits and stimulates the ligase activity of LigD. The protein is Non-homologous end joining protein Ku of Streptomyces griseus subsp. griseus (strain JCM 4626 / CBS 651.72 / NBRC 13350 / KCC S-0626 / ISP 5235).